Reading from the N-terminus, the 235-residue chain is CMP-N,N'-diacetyllegionaminic acid synthase (235 aa).

The protein belongs to the CMP-NeuNAc synthase family.

The catalysed reaction is N,N-diacetyllegionaminate + CTP = CMP-N,N-diacetyllegionaminate + diphosphate. Involved in biosynthesis of legionaminic acid (5,7-diamino-3,5,7,9-tetradeoxy-D-glycero-D-galacto-non-2-ulosonic acid)(Leg), a sialic acid-like derivative that is incorporated into flagellin via O-linkage to Ser/Thr. Catalyzes the conversion of N,N'-diacetyllegionaminic acid (Leg5Ac7Ac) and CTP into CMP-N,N'-diacetyllegionaminic acid (CMP-Leg5Ac7Ac). The polypeptide is CMP-N,N'-diacetyllegionaminic acid synthase (legF) (Campylobacter jejuni subsp. jejuni serotype O:2 (strain ATCC 700819 / NCTC 11168)).